We begin with the raw amino-acid sequence, 556 residues long: MNSLEQVKGLIKEEIQAAVLKAELATEEQIPNVVLESPKDKTNGDFSTNMAMQLARVAKKAPRMIAEELVANFDKAKASIEKIEIAGPGFINFYMDNSYLTDLIPTIVNAGEAYGETNTGKGEKVQVEFVSANPTGDLHLGHARGAAVGDTLCNLLAKAGYDVSREYYINDAGNQIHNLALSVEARYMQALGLEKEMPEDGYHGADIIGIGKSLAEEFGDRYAKADEKESYEFYREYGLKYELAKLQKDLESFRVKFDVWFSETSLYKNGKIDQALAVLKERDEIFEEDGATWFRSMTYGDDKNRVLIKNDGSYTYLTPDIAYHRDKLERGFDKLINIWGADHHGYIPRMKAAIQALGYDKETLEVEIIQMVQLYQNGEKMKMSKRTGKAVTLRELMEEVGVDAMRYFFAMRSGDSHLDFDMDLAVSKSNENPVYYAQYAHARVCSILRQGEELGLATGGDVNYKLVTSEKEVELLKKLGEFPAVVADAAQKRLPHRITNYAFELAATLHSFYNAEKVLNQDNLELSKARYELMKAVRTTLQNALAIVGVSAPEKM.

The 'HIGH' region motif lies at alanine 132–histidine 142.

The protein belongs to the class-I aminoacyl-tRNA synthetase family. As to quaternary structure, monomer.

It localises to the cytoplasm. It catalyses the reaction tRNA(Arg) + L-arginine + ATP = L-arginyl-tRNA(Arg) + AMP + diphosphate. The sequence is that of Arginine--tRNA ligase 2 from Bacillus thuringiensis subsp. konkukian (strain 97-27).